Reading from the N-terminus, the 212-residue chain is Ribonuclease HII (212 aa).

The RNase H type-2 domain occupies 19–212 (CIIVGVDEVG…SKISYMFKNS (194 aa)). Residues aspartate 25, glutamate 26, and aspartate 120 each coordinate a divalent metal cation.

The protein belongs to the RNase HII family. The cofactor is Mn(2+). It depends on Mg(2+) as a cofactor.

The protein localises to the cytoplasm. The enzyme catalyses Endonucleolytic cleavage to 5'-phosphomonoester.. In terms of biological role, endonuclease that specifically degrades the RNA of RNA-DNA hybrids. This chain is Ribonuclease HII, found in Ehrlichia ruminantium (strain Welgevonden).